The sequence spans 560 residues: Bifunctional NAD(P)H-hydrate repair enzyme (560 aa).

The NAD(P)H-hydrate epimerase stretch occupies residues 1-241; sequence MLSRLSERCS…WMTAPERMRA (241 aa). The 207-residue stretch at 29–235 folds into the YjeF N-terminal domain; sequence LRDAEPAAAA…SLGLEDWMTA (207 aa). An NADPHX 1; for epimerase activity region spans residues 77-81; sequence NNGGD. K(+)-binding residues include Asn-78 and Asp-145. The tract at residues 149–155 is NADPHX 1; for epimerase activity; that stretch reads GTGICGP. Residues Tyr-160 and Asp-178 each contribute to the (6S)-NADPHX site. Position 181 (Ser-181) interacts with K(+). A YjeF C-terminal domain is found at 249–547; that stretch reads LDDVYEYFGI…HRVPLIVNAS (299 aa). Positions 249-560 are ADP-dependent (S)-NAD(P)H-hydrate dehydratase; it reads LDDVYEYFGI…PATRQRSSGP (312 aa). (6S)-NADPHX is bound at residue Gly-351. Residues 417-423 are NADPHX 2; for dehydratase activity; the sequence is HPGEAAR. ADP-binding positions include 454–458 and 475–484; these read KGPGT and NAGMASGGMG. Residue Asp-485 coordinates (6S)-NADPHX.

The protein in the N-terminal section; belongs to the NnrE/AIBP family. In the C-terminal section; belongs to the NnrD/CARKD family. It depends on K(+) as a cofactor.

The enzyme catalyses (6S)-NADHX + ADP = AMP + phosphate + NADH + H(+). It catalyses the reaction (6S)-NADPHX + ADP = AMP + phosphate + NADPH + H(+). It carries out the reaction (6R)-NADHX = (6S)-NADHX. The catalysed reaction is (6R)-NADPHX = (6S)-NADPHX. In terms of biological role, bifunctional enzyme that catalyzes the epimerization of the S- and R-forms of NAD(P)HX and the dehydration of the S-form of NAD(P)HX at the expense of ADP, which is converted to AMP. This allows the repair of both epimers of NAD(P)HX, a damaged form of NAD(P)H that is a result of enzymatic or heat-dependent hydration. The polypeptide is Bifunctional NAD(P)H-hydrate repair enzyme (Leishmania infantum).